Reading from the N-terminus, the 1381-residue chain is Hepatocyte growth factor receptor (1381 aa).

The first 24 residues, 1 to 24 (MKALAVLGPGLLVHLLTLVQKSGG), serve as a signal peptide directing secretion. Residues 25–932 (ECKEALVKSA…VIVQPDQNFT (908 aa)) lie on the Extracellular side of the membrane. The 489-residue stretch at 27-515 (KEALVKSAMN…TGKTITKIPL (489 aa)) folds into the Sema domain. N45 and N74 each carry an N-linked (GlcNAc...) asparagine glycan. 6 disulfides stabilise this stretch: C95/C101, C98/C159, C133/C141, C172/C175, C298/C363, and C385/C397. N-linked (GlcNAc...) asparagine glycosylation occurs at N106. An N-linked (GlcNAc...) asparagine glycan is attached at N358. N399 carries N-linked (GlcNAc...) asparagine glycosylation. 4 disulfides stabilise this stretch: C520–C538, C526–C561, C529–C545, and C541–C551. IPT/TIG domains follow at residues 563–655 (PTIY…FSYV), 657–739 (PIIT…FNYR), and 742–836 (PIVD…LIYV). Residue T582 is glycosylated (O-linked (Man) threonine). 2 N-linked (GlcNAc...) asparagine glycosylation sites follow: N607 and N635. 2 O-linked (Man) threonine glycosylation sites follow: T676 and T761. 3 N-linked (GlcNAc...) asparagine glycosylation sites follow: N785, N879, and N930. The chain crosses the membrane as a helical span at residues 933–955 (GLIVGVISISVLLSLLFGLFLWL). Topologically, residues 956-1381 (KRRKQIKDLG…QDHVDGEGDT (426 aa)) are cytoplasmic. Phosphoserine is present on S966. A Phosphothreonine modification is found at T977. Phosphoserine occurs at positions 990, 997, and 1000. The residue at position 1003 (Y1003) is a Phosphotyrosine. The Protein kinase domain maps to 1078 to 1345 (VHFNEVIGRG…RISAIFSAFI (268 aa)). ATP is bound by residues 1084-1092 (IGRGHFGCV) and K1110. The Proton acceptor role is filled by D1204. The segment at 1212-1381 (LDENFTVKVA…QDHVDGEGDT (170 aa)) is interaction with RANBP9. Position 1230 is a phosphotyrosine (Y1230). 2 positions are modified to phosphotyrosine; by autocatalysis: Y1234 and Y1235. T1289 bears the Phosphothreonine mark. Residues 1320–1359 (WHPKAEQRPSFAELVSRISAIFSAFIGEHYVHVNATYVNV) form an interaction with MUC20 region. Y1349 and Y1356 each carry phosphotyrosine; by autocatalysis. Y1365 bears the Phosphotyrosine mark.

It belongs to the protein kinase superfamily. Tyr protein kinase family. In terms of assembly, heterodimer made of an alpha chain (50 kDa) and a beta chain (145 kDa) which are disulfide linked. Binds PLXNB1. Interacts when phosphorylated with downstream effectors including STAT3, PIK3R1, SRC, PCLG1, GRB2 and GAB1. Interacts with SPSB1, SPSB2 and SPSB4. Interacts with INPP5D/SHIP1. When phosphorylated at Tyr-1356, interacts with INPPL1/SHIP2. Interacts with RANBP9 and RANBP10, as well as SPSB1, SPSB2, SPSB3 and SPSB4. SPSB1 binding occurs in the presence and in the absence of HGF, however HGF treatment has a positive effect on this interaction. Interacts with MUC20; prevents interaction with GRB2 and suppresses hepatocyte growth factor-induced cell proliferation. Interacts with GRB10. Interacts with PTPN1 and PTPN2. Interacts with HSP90AA1 and HSP90AB1; the interaction suppresses MET kinase activity. Interacts with tensin TNS3. Interacts (when phosphorylated) with tensin TNS4 (via SH2 domain); the interaction increases MET protein stability by inhibiting MET endocytosis and subsequent lysosomal degradation. Post-translationally, autophosphorylated in response to ligand binding on Tyr-1234 and Tyr-1235 in the kinase domain leading to further phosphorylation of Tyr-1349 and Tyr-1356 in the C-terminal multifunctional docking site. Dephosphorylated by PTPRJ at Tyr-1349 and Tyr-1365. Dephosphorylated by PTPN1 and PTPN2. In terms of processing, ubiquitinated. Ubiquitination by CBL regulates the receptor stability and activity through proteasomal degradation. O-mannosylation of IPT/TIG domains by TMEM260 is required for protein maturation. O-mannosylated residues are composed of single mannose glycans that are not elongated or modified.

It is found in the membrane. It carries out the reaction L-tyrosyl-[protein] + ATP = O-phospho-L-tyrosyl-[protein] + ADP + H(+). With respect to regulation, in its inactive state, the C-terminal tail interacts with the catalytic domain and inhibits the kinase activity. Upon ligand binding, the C-terminal tail is displaced and becomes phosphorylated, thus increasing the kinase activity. Its function is as follows. Receptor tyrosine kinase that transduces signals from the extracellular matrix into the cytoplasm by binding to hepatocyte growth factor/HGF ligand. Regulates many physiological processes including proliferation, scattering, morphogenesis and survival. Ligand binding at the cell surface induces autophosphorylation of MET on its intracellular domain that provides docking sites for downstream signaling molecules. Following activation by ligand, interacts with the PI3-kinase subunit PIK3R1, PLCG1, SRC, GRB2, STAT3 or the adapter GAB1. Recruitment of these downstream effectors by MET leads to the activation of several signaling cascades including the RAS-ERK, PI3 kinase-AKT, or PLCgamma-PKC. The RAS-ERK activation is associated with the morphogenetic effects while PI3K/AKT coordinates prosurvival effects. During embryonic development, MET signaling plays a role in gastrulation, development and migration of muscles and neuronal precursors, angiogenesis and kidney formation. In adults, participates in wound healing as well as organ regeneration and tissue remodeling. Also promotes differentiation and proliferation of hematopoietic cells. The sequence is that of Hepatocyte growth factor receptor (MET) from Rhinolophus ferrumequinum (Greater horseshoe bat).